A 118-amino-acid chain; its full sequence is MAMANHRIDRVGMEIKREVNDILQKKVRDPRVQGVTITEVQMQGDLSLAKVYYTIMSDLASDNQKAQTGLEKATGTIKRELGKQLTMYKIPDLVFEKDNSIAYGNKIDQLLRDLDNKS.

This sequence belongs to the RbfA family. In terms of assembly, monomer. Binds 30S ribosomal subunits, but not 50S ribosomal subunits or 70S ribosomes.

The protein localises to the cytoplasm. Its function is as follows. One of several proteins that assist in the late maturation steps of the functional core of the 30S ribosomal subunit. Associates with free 30S ribosomal subunits (but not with 30S subunits that are part of 70S ribosomes or polysomes). Required for efficient processing of 16S rRNA. May interact with the 5'-terminal helix region of 16S rRNA. The chain is Ribosome-binding factor A from Streptococcus pyogenes serotype M1.